A 168-amino-acid polypeptide reads, in one-letter code: 2-C-methyl-D-erythritol 2,4-cyclodiphosphate synthase (168 aa).

Aspartate 11 and histidine 13 together coordinate a divalent metal cation. Residues 11 to 13 (DVH) and 38 to 39 (HS) contribute to the 4-CDP-2-C-methyl-D-erythritol 2-phosphate site. Histidine 46 provides a ligand contact to a divalent metal cation. Residues 60 to 62 (DIG), 133 to 136 (TTTD), phenylalanine 140, and arginine 143 each bind 4-CDP-2-C-methyl-D-erythritol 2-phosphate.

The protein belongs to the IspF family. In terms of assembly, homotrimer. It depends on a divalent metal cation as a cofactor.

It carries out the reaction 4-CDP-2-C-methyl-D-erythritol 2-phosphate = 2-C-methyl-D-erythritol 2,4-cyclic diphosphate + CMP. The protein operates within isoprenoid biosynthesis; isopentenyl diphosphate biosynthesis via DXP pathway; isopentenyl diphosphate from 1-deoxy-D-xylulose 5-phosphate: step 4/6. Its function is as follows. Involved in the biosynthesis of isopentenyl diphosphate (IPP) and dimethylallyl diphosphate (DMAPP), two major building blocks of isoprenoid compounds. Catalyzes the conversion of 4-diphosphocytidyl-2-C-methyl-D-erythritol 2-phosphate (CDP-ME2P) to 2-C-methyl-D-erythritol 2,4-cyclodiphosphate (ME-CPP) with a corresponding release of cytidine 5-monophosphate (CMP). This is 2-C-methyl-D-erythritol 2,4-cyclodiphosphate synthase from Cutibacterium acnes (strain DSM 16379 / KPA171202) (Propionibacterium acnes).